The sequence spans 906 residues: Translation initiation factor IF-2 (906 aa).

3 disordered regions span residues A94 to A125, E165 to K232, and R270 to V321. Composition is skewed to basic and acidic residues over residues E165 to K176, G222 to K232, and R270 to A284. Residues Q299–Y313 show a composition bias toward basic residues. Residues E405–K574 form the tr-type G domain. Positions G414–T421 are G1. G414–T421 is a binding site for GTP. A G2 region spans residues G439–H443. Positions D460–G463 are G3. GTP is bound by residues D460 to H464 and N514 to D517. Residues N514–D517 form a G4 region. The segment at S550–H552 is G5.

Belongs to the TRAFAC class translation factor GTPase superfamily. Classic translation factor GTPase family. IF-2 subfamily.

It is found in the cytoplasm. In terms of biological role, one of the essential components for the initiation of protein synthesis. Protects formylmethionyl-tRNA from spontaneous hydrolysis and promotes its binding to the 30S ribosomal subunits. Also involved in the hydrolysis of GTP during the formation of the 70S ribosomal complex. This is Translation initiation factor IF-2 from Sulfurovum sp. (strain NBC37-1).